A 437-amino-acid chain; its full sequence is Elongation factor 1-gamma (437 aa).

Ala2 is modified (N-acetylalanine). The region spanning 2–87 (AAGTLYTYPE…YVSNEELRGS (86 aa)) is the GST N-terminal domain. Residues 88–216 (TPEAAAQVVQ…VKLCEKMAQF (129 aa)) enclose the GST C-terminal domain. N6-acetyllysine occurs at positions 147 and 212. The segment covering 221–254 (FAETQPKKDTPRKEKGSREEKQKPQAERKEEKKA) has biased composition (basic and acidic residues). A disordered region spans residues 221-268 (FAETQPKKDTPRKEKGSREEKQKPQAERKEEKKAAAPAPEEEMDECEQ). Lys253 is covalently cross-linked (Glycyl lysine isopeptide (Lys-Gly) (interchain with G-Cter in SUMO1)). The EF-1-gamma C-terminal domain maps to 276–437 (AKDPFAHLPK…KAFNQGKIFK (162 aa)). A Glycyl lysine isopeptide (Lys-Gly) (interchain with G-Cter in SUMO2) cross-link involves residue Lys285. At Lys401 the chain carries N6-acetyllysine. Lys434 carries the post-translational modification N6-acetyllysine; alternate. Position 434 is an N6-malonyllysine; alternate (Lys434).

EF-1 is composed of four subunits: alpha, beta, delta, and gamma.

Functionally, probably plays a role in anchoring the complex to other cellular components. This is Elongation factor 1-gamma (EEF1G) from Macaca fascicularis (Crab-eating macaque).